The chain runs to 244 residues: MVATVKRTIRIKTQQHILPEVPPVENFPVRQWSIEIVLLDDEGKEIPATIFDKVIYHLHPTFANPNRTFTDPPFRIEEQGWGGFPLDISVFLLEKAGERKIPHDLNFLQESYEVEHVIQIPLNKPLLTEELAKSGSTEETTANTGTIGKRRTTTNTTAEPKAKRAKTGSASTVKGSVDLEKLAFGLTKLNEDDLVGVVQMVTDNKTPEMNVTNNVEEGEFIIDLYSLPEGLLKSLWDYVKKNTE.

The YEATS domain maps to 1-134 (MVATVKRTIR…PLLTEELAKS (134 aa)). 2 acylated histone binding regions span residues 59-61 (HPT) and 81-83 (WGG). The segment at 133-169 (KSGSTEETTANTGTIGKRRTTTNTTAEPKAKRAKTGS) is disordered. The span at 143-157 (NTGTIGKRRTTTNTT) shows a compositional bias: low complexity. Lys181 participates in a covalent cross-link: Glycyl lysine isopeptide (Lys-Gly) (interchain with G-Cter in ubiquitin).

Belongs to the TAF14 family. As to quaternary structure, the 1.2 MDa TFIID complex is composed of TATA binding protein (TBP) and the 14 TBP-associated factors. One copy of each TAF1, TAF2, TAF3, TAF7, TAF8, TAF11, TAF13, two copies of each TAF4, TAF5, TAF6, TAF9, TAF10, TAF12, and three copies of TAF14. TFIIF is composed of three different subunits: TFG1/RAP74, TFG2/RAP30 and TAF14. Component of the SWI/SNF global transcription activator complex. The 1.14 MDa SWI/SNF complex is composed of 11 different subunits: one copy each of SWI1, SNF2/SWI2, SNF5, SNF12/SWP73, ARP7/SWP61, ARP9/SWP59; two copies each of SWI3, SNF6, SNF11, SWP82; and three copies of TAF14/SWP29. Component of the chromatin-remodeling INO80 complex, at least composed of ARP4, ARP5, ARP8, RVB1, RVB2, TAF14, NHP10, IES1, IES3, IES4, IES6, ACT1, IES2, IES5 and INO80. Component of the NuA3 histone acetyltransferase (HAT) complex. The NuA3 HAT complex has 2 functionally distinct forms that participate in transcription. The NuA3b HAT complex contains an additional subunit, PDP3.

Its subcellular location is the nucleus. Its function is as follows. Functions as a component of the DNA-binding general transcription factor complex TFIID, the RNA polymerase II associated general transcription factor complex TFIIF, and the chromatin-remodeling complex SWI/SNF. Binding of TFIID to a promoter (with or without TATA element) is the initial step in preinitiation complex (PIC) formation. TFIID plays a key role in the regulation of gene expression by RNA polymerase II through different activities such as transcription activator interaction, core promoter recognition and selectivity, TFIIA and TFIIB interaction, chromatin modification (histone acetylation by TAF1), facilitation of DNA opening and initiation of transcription. TFIIF is essential for the initiation of transcription by RNA polymerase II. TFIIF functions include the recruitment of RNA polymerase II to the promoter bound DNA-TBP-TFIIB complex, decreasing the affinity of RNA polymerase II for non-specific DNA, allowing for the subsequent recruitment of TFIIE and TFIIH, and facilitating RNA polymerase II elongation. TAF14 acts as a chromatin reader that specifically recognizes and binds histones that are acylated. Recognizes and binds histone H3 acetylated or crotonylated at 'Lys-9' (H3K9ac and H3K9cr, respectively), with some preference for crotonylated lysine. Component of the SWI/SNF complex, an ATP-dependent chromatin-remodeling complex, is required for the positive and negative regulation of gene expression of a large number of genes. It changes chromatin structure by altering DNA-histone contacts within a nucleosome, leading eventually to a change in nucleosome position, thus facilitating or repressing binding of gene-specific transcription factors. Component of the NuA3 histone acetyltransferase complex. The NuA3 HAT complex has 2 functionally distinct forms. NuA3a binds H3K4me3, through the PHD finger of YNG1, and acetylates H3K14 at the promoter region of actively transcribed genes to promote transcription initiation. NuA3b binds H3K36me3 at the coding regions of actively transcribed genes, through the PWWP domain of PDP3, and coordinates transcription elongation. Does not bind DNA. In Saccharomyces cerevisiae (strain ATCC 204508 / S288c) (Baker's yeast), this protein is Transcription initiation factor TFIID subunit 14 (TAF14).